Consider the following 204-residue polypeptide: Urease accessory protein UreG (204 aa).

Residue 12-19 (GPVGSGKT) participates in GTP binding.

It belongs to the SIMIBI class G3E GTPase family. UreG subfamily. As to quaternary structure, homodimer. UreD, UreF and UreG form a complex that acts as a GTP-hydrolysis-dependent molecular chaperone, activating the urease apoprotein by helping to assemble the nickel containing metallocenter of UreC. The UreE protein probably delivers the nickel.

The protein localises to the cytoplasm. In terms of biological role, facilitates the functional incorporation of the urease nickel metallocenter. This process requires GTP hydrolysis, probably effectuated by UreG. The chain is Urease accessory protein UreG from Azotobacter vinelandii (strain DJ / ATCC BAA-1303).